The primary structure comprises 257 residues: Mitochondrial distribution and morphology protein 12 (257 aa).

One can recognise an SMP-LTD domain in the interval 1-256 (MSFEINWEKL…WPSWVNLDFN (256 aa)). Positions 74 to 98 (YEEDNETSSEMHGRDGQNVGESGEE) are disordered.

This sequence belongs to the MDM12 family. In terms of assembly, component of the ER-mitochondria encounter structure (ERMES) or MDM complex, composed of MMM1, MDM10, MDM12 and MDM34. An MMM1 homodimer associates with one molecule of MDM12 on each side in a pairwise head-to-tail manner, and the SMP-LTD domains of MMM1 and MDM12 generate a continuous hydrophobic tunnel for phospholipid trafficking.

Its subcellular location is the mitochondrion outer membrane. It localises to the endoplasmic reticulum membrane. In terms of biological role, component of the ERMES/MDM complex, which serves as a molecular tether to connect the endoplasmic reticulum (ER) and mitochondria. Components of this complex are involved in the control of mitochondrial shape and protein biogenesis, and function in nonvesicular lipid trafficking between the ER and mitochondria. MDM12 is required for the interaction of the ER-resident membrane protein MMM1 and the outer mitochondrial membrane-resident beta-barrel protein MDM10. The MDM12-MMM1 subcomplex functions in the major beta-barrel assembly pathway that is responsible for biogenesis of all mitochondrial outer membrane beta-barrel proteins, and acts in a late step after the SAM complex. The MDM10-MDM12-MMM1 subcomplex further acts in the TOM40-specific pathway after the action of the MDM12-MMM1 complex. Essential for establishing and maintaining the structure of mitochondria and maintenance of mtDNA nucleoids. In Candida glabrata (strain ATCC 2001 / BCRC 20586 / JCM 3761 / NBRC 0622 / NRRL Y-65 / CBS 138) (Yeast), this protein is Mitochondrial distribution and morphology protein 12.